We begin with the raw amino-acid sequence, 734 residues long: Cleavage stimulation factor subunit 77 (734 aa).

12 HAT repeats span residues 20–52 (SPIA…AQMA), 54–85 (NNDD…FIRK), 93–128 (EGQE…FLKS), 139–172 (HRKT…FENT), 198–237 (ERKK…FEKG), 246–278 (SSTK…WHVK), 280–312 (GSTD…MEES), 314–345 (GAIQ…FLRR), 347–379 (EGVE…MAFC), 382–414 (KEPK…FLTR), 416–450 (NDDR…FEQT), and 474–505 (EGSS…DLDH). The disordered stretch occupies residues 637–734 (VKQSFAAKGN…FSGELSGSTG (98 aa)). Residues 664–677 (LPRDRRATKRKDSD) show a composition bias toward basic and acidic residues. Positions 709–734 (ATSSQTPTGSTSYGSAFSGELSGSTG) are enriched in polar residues.

As to quaternary structure, homodimer. Belongs to the CSTF complex. Forms a complex with cleavage and polyadenylation specificity factor (CPSF) subunits CPSF30, CSTF64, PCFS1, PCFS5 and FIPS5.

It is found in the nucleus. Its function is as follows. One of the multiple factors required for polyadenylation and 3'-end cleavage of pre-mRNAs. Required for the targeted 3' processing of antisense transcripts that triggers transcriptional silencing of the corresponding sense gene. This Arabidopsis thaliana (Mouse-ear cress) protein is Cleavage stimulation factor subunit 77.